The primary structure comprises 1345 residues: CRISPR-associated endonuclease Cas9 (1345 aa).

Asp10 functions as the For RuvC-like nuclease domain in the catalytic mechanism. The Mg(2+) site is built by Asp10, Glu762, and Glu766. Positions 770–921 (TNQGRRNSQQ…DKAGFIKRQL (152 aa)) constitute an HNH Cas9-type domain. His840 acts as the Proton acceptor for HNH nuclease domain in catalysis. Mg(2+) is bound at residue His983.

Belongs to the CRISPR-associated protein Cas9 family. Subtype II-A subfamily. As to quaternary structure, monomer. Binds crRNA and tracrRNA. Requires Mg(2+) as cofactor.

Its function is as follows. CRISPR (clustered regularly interspaced short palindromic repeat) is an adaptive immune system that provides protection against mobile genetic elements (viruses, transposable elements and conjugative plasmids). CRISPR clusters contain spacers, sequences complementary to antecedent mobile elements, and target invading nucleic acids. CRISPR clusters are transcribed and processed into CRISPR RNA (crRNA). In type II CRISPR systems correct processing of pre-crRNA requires a trans-encoded small RNA (tracrRNA), endogenous ribonuclease 3 (rnc) and this protein. The tracrRNA serves as a guide for ribonuclease 3-aided processing of pre-crRNA. Subsequently Cas9/crRNA/tracrRNA endonucleolytically cleaves linear or circular dsDNA target complementary to the spacer; Cas9 is inactive in the absence of the 2 guide RNAs (gRNA). Cas9 recognizes the protospacer adjacent motif (PAM) in the CRISPR repeat sequences to help distinguish self versus nonself, as targets within the bacterial CRISPR locus do not have PAMs. PAM recognition is also required for catalytic activity. Complements the gRNA coprocessing defect in a cas9 deletion in S.pyogenes strain 370 and cuts target plasmid in Cas9:gRNAs mixing experiments with S.thermophilus CRISPR3 from strain LMD-9. In Streptococcus mutans serotype c (strain ATCC 700610 / UA159), this protein is CRISPR-associated endonuclease Cas9.